Here is a 1310-residue protein sequence, read N- to C-terminus: Clustered mitochondria protein homolog (1310 aa).

A Clu domain is found at 375 to 619; sequence DITRSQESYL…RVTPLDVVWQ (245 aa). Basic and acidic residues predominate over residues 662–682; the sequence is KAQEDAANKEQPSETTESKEG. Disordered regions lie at residues 662–692 and 931–960; these read KAQE…EEAL and VANG…SRAV. 3 TPR repeats span residues 1033–1066, 1075–1108, and 1117–1150; these read AKLY…TERT, ILAY…WKII, and ITTM…CESL. Disordered stretches follow at residues 1245 to 1266 and 1281 to 1310; these read VQPQ…ANAS and GGDA…KSSA.

The protein belongs to the CLU family. In terms of assembly, may associate with the eukaryotic translation initiation factor 3 (eIF-3) complex.

Its subcellular location is the cytoplasm. Its function is as follows. mRNA-binding protein involved in proper cytoplasmic distribution of mitochondria. This is Clustered mitochondria protein homolog from Aspergillus fumigatus (strain CBS 144.89 / FGSC A1163 / CEA10) (Neosartorya fumigata).